A 356-amino-acid polypeptide reads, in one-letter code: 4-hydroxybenzoate polyprenyltransferase, mitochondrial (356 aa).

The transit peptide at 1 to 44 directs the protein to the mitochondrion; it reads MITRSIGIARRSNSINCIVGSNTSTSYSLDESTKRWISTSTKQP. Transmembrane regions (helical) follow at residues 71–91, 93–113, 150–170, 195–215, 269–289, and 332–352; these read VDKPIGTWLLYWPCTWSIAMA, PAGQLPSIYMLSLFGAGAFLM, AIGLLAGLLSSSLAILLQLNW, WPQFVLGLTFNWGALLGWCAL, WLSAFGVGTVASLTACGIASD, and IILFSGIVASTLLKEVFQILI.

Belongs to the UbiA prenyltransferase family. Mg(2+) is required as a cofactor.

The protein localises to the mitochondrion inner membrane. It catalyses the reaction an all-trans-polyprenyl diphosphate + 4-hydroxybenzoate = a 4-hydroxy-3-(all-trans-polyprenyl)benzoate + diphosphate. It participates in cofactor biosynthesis; ubiquinone biosynthesis. Functionally, catalyzes the prenylation of para-hydroxybenzoate (PHB) with an all-trans polyprenyl group. Mediates the second step in the final reaction sequence of coenzyme Q (CoQ) biosynthesis, which is the condensation of the polyisoprenoid side chain with PHB, generating the first membrane-bound Q intermediate. This chain is 4-hydroxybenzoate polyprenyltransferase, mitochondrial (coq-2), found in Caenorhabditis elegans.